The sequence spans 138 residues: Transcription antitermination protein NusB (138 aa).

This sequence belongs to the NusB family.

Its function is as follows. Involved in transcription antitermination. Required for transcription of ribosomal RNA (rRNA) genes. Binds specifically to the boxA antiterminator sequence of the ribosomal RNA (rrn) operons. The sequence is that of Transcription antitermination protein NusB from Limosilactobacillus reuteri (strain DSM 20016) (Lactobacillus reuteri).